The following is a 363-amino-acid chain: 5-formaminoimidazole-4-carboxamide-1-(beta)-D-ribofuranosyl 5'-monophosphate synthetase (363 aa).

5-amino-1-(5-phospho-beta-D-ribosyl)imidazole-4-carboxamide contacts are provided by H29 and S96. Residues 118–354 form the ATP-grasp domain; it reads RDILRWEAER…IALEIKNAIK (237 aa). ATP contacts are provided by residues 148–210 and E232; that span reads PSEI…CNYC. Residue N260 coordinates 5-amino-1-(5-phospho-beta-D-ribosyl)imidazole-4-carboxamide. Mg(2+)-binding residues include Q299 and E312.

The protein belongs to the phosphohexose mutase family. Requires Mg(2+) as cofactor. The cofactor is Mn(2+).

The enzyme catalyses 5-amino-1-(5-phospho-beta-D-ribosyl)imidazole-4-carboxamide + formate + ATP = 5-formamido-1-(5-phospho-D-ribosyl)imidazole-4-carboxamide + ADP + phosphate. It participates in purine metabolism; IMP biosynthesis via de novo pathway; 5-formamido-1-(5-phospho-D-ribosyl)imidazole-4-carboxamide from 5-amino-1-(5-phospho-D-ribosyl)imidazole-4-carboxamide (formate route): step 1/1. In terms of biological role, catalyzes the ATP- and formate-dependent formylation of 5-aminoimidazole-4-carboxamide-1-beta-d-ribofuranosyl 5'-monophosphate (AICAR) to 5-formaminoimidazole-4-carboxamide-1-beta-d-ribofuranosyl 5'-monophosphate (FAICAR) in the absence of folates. The sequence is that of 5-formaminoimidazole-4-carboxamide-1-(beta)-D-ribofuranosyl 5'-monophosphate synthetase from Methanobrevibacter smithii (strain ATCC 35061 / DSM 861 / OCM 144 / PS).